The primary structure comprises 176 residues: Large ribosomal subunit protein uL10 (176 aa).

The protein belongs to the universal ribosomal protein uL10 family. Part of the ribosomal stalk of the 50S ribosomal subunit. The N-terminus interacts with L11 and the large rRNA to form the base of the stalk. The C-terminus forms an elongated spine to which L12 dimers bind in a sequential fashion forming a multimeric L10(L12)X complex.

In terms of biological role, forms part of the ribosomal stalk, playing a central role in the interaction of the ribosome with GTP-bound translation factors. The sequence is that of Large ribosomal subunit protein uL10 from Streptomyces avermitilis (strain ATCC 31267 / DSM 46492 / JCM 5070 / NBRC 14893 / NCIMB 12804 / NRRL 8165 / MA-4680).